A 654-amino-acid chain; its full sequence is Macrolide export ATP-binding/permease protein MacB (654 aa).

An ABC transporter domain is found at 6–244 (IELRGLRREF…RAGDAPTRQP (239 aa)). Residue 42–49 (GASGSGKS) participates in ATP binding. The next 4 helical transmembrane spans lie at 278–298 (FLTM…VAVG), 527–547 (LTLM…IGVM), 584–604 (VVCL…AALF), and 619–639 (SIAA…YLPA).

The protein belongs to the ABC transporter superfamily. Macrolide exporter (TC 3.A.1.122) family. Homodimer.

It is found in the cell inner membrane. Functionally, non-canonical ABC transporter that contains transmembrane domains (TMD), which form a pore in the inner membrane, and an ATP-binding domain (NBD), which is responsible for energy generation. Confers resistance against macrolides. The protein is Macrolide export ATP-binding/permease protein MacB of Rhodopseudomonas palustris (strain HaA2).